The following is a 123-amino-acid chain: Glutaredoxin-like protein (123 aa).

The 97-residue stretch at 27–123 folds into the Glutaredoxin domain; sequence INEVEESITN…GTLFNDLKKK (97 aa).

This sequence belongs to the glutaredoxin family.

This Dictyostelium discoideum (Social amoeba) protein is Glutaredoxin-like protein (grxB).